The chain runs to 174 residues: Peptidyl-prolyl cis-trans isomerase-like 1 (174 aa).

The PPIase cyclophilin-type domain occupies 5 to 159 (SPTYVTFDTS…EEIKIHRARL (155 aa)).

Belongs to the cyclophilin-type PPIase family. PPIL1 subfamily.

The catalysed reaction is [protein]-peptidylproline (omega=180) = [protein]-peptidylproline (omega=0). PPIases accelerate the folding of proteins. It catalyzes the cis-trans isomerization of proline imidic peptide bonds in oligopeptides. This Cryptococcus neoformans var. neoformans serotype D (strain B-3501A) (Filobasidiella neoformans) protein is Peptidyl-prolyl cis-trans isomerase-like 1 (CYP1).